A 201-amino-acid polypeptide reads, in one-letter code: Small ribosomal subunit protein uS4 (201 aa).

The interval 1–42 is disordered; sequence MARYTGPATRKSRRLGVDLVGGDQSFEKRPYPPGQHGRARIK. An S4 RNA-binding domain is found at 91–157; the sequence is SRLDNVVYRA…LPFQIARETA (67 aa).

This sequence belongs to the universal ribosomal protein uS4 family. Part of the 30S ribosomal subunit. Contacts protein S5. The interaction surface between S4 and S5 is involved in control of translational fidelity.

Functionally, one of the primary rRNA binding proteins, it binds directly to 16S rRNA where it nucleates assembly of the body of the 30S subunit. Its function is as follows. With S5 and S12 plays an important role in translational accuracy. In Mycolicibacterium smegmatis (strain ATCC 700084 / mc(2)155) (Mycobacterium smegmatis), this protein is Small ribosomal subunit protein uS4.